A 195-amino-acid chain; its full sequence is MEELLSAVIIGIVLGWLCKDWLHFPNGSNLYVLITLIFFVGIQLRNNGISLKEVLLNKQGLMMGAIFTLSSLIGGVISAFFLSMPITQGLAFSSGFGWYSLSSVVLTNAWGPMQGSIAFFNDLSREILSLFLIPLFMQHYRSTAIEITGATALDCTLPIIQKSGGIEVTPIAISFGMVTNLLPPLLLVFFSSFPI.

Helical transmembrane passes span 4 to 24 (LLSA…WLHF), 30 to 50 (LYVL…NGIS), 61 to 81 (LMMG…SAFF), 86 to 106 (ITQG…SVVL), 117 to 137 (IAFF…PLFM), and 170 to 190 (PIAI…LVFF).

Belongs to the LysO family.

Its subcellular location is the cell inner membrane. Its function is as follows. Mediates export of lysine. This chain is Putative lysine exporter, found in Haemophilus influenzae (strain ATCC 51907 / DSM 11121 / KW20 / Rd).